The sequence spans 87 residues: UPF0250 protein YE3006 (87 aa).

This sequence belongs to the UPF0250 family.

The polypeptide is UPF0250 protein YE3006 (Yersinia enterocolitica serotype O:8 / biotype 1B (strain NCTC 13174 / 8081)).